Reading from the N-terminus, the 185-residue chain is Transposon Tn3 resolvase (185 aa).

A Resolvase/invertase-type recombinase catalytic domain is found at 2-137; the sequence is RIFGYARVST…EGRQEAKLKG (136 aa). Residue serine 10 is the O-(5'-phospho-DNA)-serine intermediate of the active site. The H-T-H motif DNA-binding region spans 161–180; that stretch reads ATEIAHQLSIARSTVYKILE.

The protein belongs to the site-specific recombinase resolvase family.

Resolvase catalyzes the resolution (a site-specific recombination) of the cointegrated replicon to yield the final transposition products. This Escherichia coli protein is Transposon Tn3 resolvase (tnpR).